Here is a 457-residue protein sequence, read N- to C-terminus: F-box only protein 13 (457 aa).

The F-box domain maps to 64 to 110 (EFPMDDLNDDVLERVLSWLPTSCFFRMSSVCKRWKSSQTSKSFKLAC).

The polypeptide is F-box only protein 13 (FBX13) (Arabidopsis thaliana (Mouse-ear cress)).